The chain runs to 366 residues: Chorismate synthase (366 aa).

NADP(+) is bound by residues R48 and R54. FMN is bound by residues 129–131, 241–242, G290, 305–309, and R331; these read RSS, NA, and KPTSS.

The protein belongs to the chorismate synthase family. As to quaternary structure, homotetramer. Requires FMNH2 as cofactor.

It carries out the reaction 5-O-(1-carboxyvinyl)-3-phosphoshikimate = chorismate + phosphate. It functions in the pathway metabolic intermediate biosynthesis; chorismate biosynthesis; chorismate from D-erythrose 4-phosphate and phosphoenolpyruvate: step 7/7. Its function is as follows. Catalyzes the anti-1,4-elimination of the C-3 phosphate and the C-6 proR hydrogen from 5-enolpyruvylshikimate-3-phosphate (EPSP) to yield chorismate, which is the branch point compound that serves as the starting substrate for the three terminal pathways of aromatic amino acid biosynthesis. This reaction introduces a second double bond into the aromatic ring system. The sequence is that of Chorismate synthase from Nitrobacter hamburgensis (strain DSM 10229 / NCIMB 13809 / X14).